The chain runs to 194 residues: Translationally-controlled tumor protein homolog 2 (194 aa).

A TCTP domain is found at 1–194 (MKLYKDLIGN…IKYGLLQVDV (194 aa)).

This sequence belongs to the TCTP family.

It is found in the cytoplasm. In terms of biological role, involved in calcium binding and microtubule stabilization. The sequence is that of Translationally-controlled tumor protein homolog 2 from Dictyostelium discoideum (Social amoeba).